The sequence spans 626 residues: Endogenous retrovirus group S71 member 1 Env polyprotein (626 aa).

An N-terminal signal peptide occupies residues 1-38; it reads MGPEAWVRPLKTAPKPGEAIRLILFIYLSCFFLPVMSS. Residues 39 to 438 are surface protein; that stretch reads EPSYSFLLTS…PPELHPRLHQ (400 aa). Residues 39-575 lie on the Extracellular side of the membrane; sequence EPSYSFLLTS…FNWNPWLTTL (537 aa). The short motif at 302 to 305 is the CXXC element; that stretch reads CWLC. A fusion peptide region spans residues 439–459; that stretch reads AVPLLVPLLAGLSIAGSAAIG. The segment at 439–626 is transmembrane protein; that stretch reads AVPLLVPLLA…KTQYDTLVNN (188 aa). The short motif at 503-519 is the CKS-17 element; it reads LQNCRCLDLLFLSQGGL. A disulfide bridge links cysteine 520 with cysteine 527. Residues 520–528 carry the CX6CC motif; sequence CAALGESCC. The helical transmembrane segment at 576–596 threads the bilayer; sequence ITGLAGPLLILLLSLIFGPCI. Residues 597-626 lie on the Cytoplasmic side of the membrane; sequence LNSFLNFIKQRIASVKLTYLKTQYDTLVNN.

This sequence belongs to the gamma type-C retroviral envelope protein family. HERV class-I T env subfamily. The CXXC motif is highly conserved across a broad range of retroviral envelope proteins. It is thought to participate in the formation of a labile disulfide bond possibly with the CX6CC motif present in the transmembrane domain. In terms of tissue distribution, expressed at higher level in thyroid. Expressed at lower level in adrenal, bone marrow, brain, breast, kidney, ovary, placenta, prostate, skin, testis and trachea.

It is found in the cell membrane. Its function is as follows. Retroviral envelope proteins mediate receptor recognition and membrane fusion during early infection. Endogenous envelope proteins may have kept, lost or modified their original function during evolution. This endogenous envelope protein has lost its original fusogenic properties. In Homo sapiens (Human), this protein is Endogenous retrovirus group S71 member 1 Env polyprotein (ERVS71-1).